The primary structure comprises 172 residues: Large ribosomal subunit protein uL5 (172 aa).

It belongs to the universal ribosomal protein uL5 family. Component of the large ribosomal subunit.

The protein localises to the nucleus. It is found in the cytoplasm. Functionally, component of the ribosome, a large ribonucleoprotein complex responsible for the synthesis of proteins in the cell. The small ribosomal subunit (SSU) binds messenger RNAs (mRNAs) and translates the encoded message by selecting cognate aminoacyl-transfer RNA (tRNA) molecules. The large subunit (LSU) contains the ribosomal catalytic site termed the peptidyl transferase center (PTC), which catalyzes the formation of peptide bonds, thereby polymerizing the amino acids delivered by tRNAs into a polypeptide chain. The nascent polypeptides leave the ribosome through a tunnel in the LSU and interact with protein factors that function in enzymatic processing, targeting, and the membrane insertion of nascent chains at the exit of the ribosomal tunnel. This is Large ribosomal subunit protein uL5 (RPL11) from Tetrahymena thermophila.